The following is a 281-amino-acid chain: Insulin-like growth factor-binding protein 2 (281 aa).

An N-terminal signal peptide occupies residues 1–21 (MVLSEHLLVLLGAVLCAPALS). The region spanning 23-106 (VLFRCPPCSP…VLGLGTCGKR (84 aa)) is the IGFBP N-terminal domain. Intrachain disulfides connect Cys27–Cys56, Cys30–Cys58, Cys38–Cys59, Cys47–Cys62, Cys70–Cys83, and Cys77–Cys103. Disordered stretches follow at residues 107-127 (RDAE…DQSD) and 139-180 (PAVP…RPAR). Basic and acidic residues predominate over residues 156-176 (VNRERANEQHRSKTNKSEDKK). Residues 180-262 (RSLCQLQLDQ…SPTVRGDPEC (83 aa)) form the Thyroglobulin type-1 domain. 3 cysteine pairs are disulfide-bonded: Cys183-Cys217, Cys228-Cys239, and Cys241-Cys262. Residues 257–259 (RGD) carry the Cell attachment site motif.

In terms of assembly, interacts with igf1 and igf2.

It is found in the secreted. IGF-binding proteins prolong the half-life of the IGFs and have been shown to either inhibit or stimulate the growth promoting effects of the IGFs on cell culture. They alter the interaction of IGFs with their cell surface receptors. This chain is Insulin-like growth factor-binding protein 2 (igfbp2), found in Xenopus laevis (African clawed frog).